The primary structure comprises 272 residues: Phosphate import ATP-binding protein PstB (272 aa).

In terms of domain architecture, ABC transporter spans 26-267 (LEIRNLDLRY…PKKRKTEDYI (242 aa)). 58–65 (GPSGCGKS) is a binding site for ATP.

It belongs to the ABC transporter superfamily. Phosphate importer (TC 3.A.1.7) family. The complex is composed of two ATP-binding proteins (PstB), two transmembrane proteins (PstC and PstA) and a solute-binding protein (PstS).

It localises to the cell inner membrane. It catalyses the reaction phosphate(out) + ATP + H2O = ADP + 2 phosphate(in) + H(+). Functionally, part of the ABC transporter complex PstSACB involved in phosphate import. Responsible for energy coupling to the transport system. In Shewanella frigidimarina (strain NCIMB 400), this protein is Phosphate import ATP-binding protein PstB.